Reading from the N-terminus, the 398-residue chain is Riboflavin biosynthesis protein RibBA (398 aa).

Residues Met1–Asn199 are DHBP synthase. Residues Arg26–Glu27, Asp31, Arg138–Thr142, and Glu162 each bind D-ribulose 5-phosphate. Glu27 serves as a coordination point for Mg(2+). His141 contributes to the Mg(2+) binding site. Positions Leu200–Phe398 are GTP cyclohydrolase II. Arg251–Glu255 lines the GTP pocket. Positions 256, 267, and 269 each coordinate Zn(2+). GTP-binding positions include Gln272, Glu294–Arg296, and Thr316. Asp328 functions as the Proton acceptor; for GTP cyclohydrolase activity in the catalytic mechanism. Arg330 acts as the Nucleophile; for GTP cyclohydrolase activity in catalysis. Residues Thr351 and Lys356 each contribute to the GTP site.

This sequence in the N-terminal section; belongs to the DHBP synthase family. It in the C-terminal section; belongs to the GTP cyclohydrolase II family. The cofactor is Mg(2+). It depends on Mn(2+) as a cofactor. Zn(2+) serves as cofactor.

The catalysed reaction is D-ribulose 5-phosphate = (2S)-2-hydroxy-3-oxobutyl phosphate + formate + H(+). It carries out the reaction GTP + 4 H2O = 2,5-diamino-6-hydroxy-4-(5-phosphoribosylamino)-pyrimidine + formate + 2 phosphate + 3 H(+). It functions in the pathway cofactor biosynthesis; riboflavin biosynthesis; 2-hydroxy-3-oxobutyl phosphate from D-ribulose 5-phosphate: step 1/1. The protein operates within cofactor biosynthesis; riboflavin biosynthesis; 5-amino-6-(D-ribitylamino)uracil from GTP: step 1/4. Catalyzes the conversion of D-ribulose 5-phosphate to formate and 3,4-dihydroxy-2-butanone 4-phosphate. Functionally, catalyzes the conversion of GTP to 2,5-diamino-6-ribosylamino-4(3H)-pyrimidinone 5'-phosphate (DARP), formate and pyrophosphate. The polypeptide is Riboflavin biosynthesis protein RibBA (Bacillus subtilis (strain 168)).